Here is a 295-residue protein sequence, read N- to C-terminus: Acetylglutamate kinase (295 aa).

Residues 67-68, R89, and N191 each bind substrate; that span reads GG.

Belongs to the acetylglutamate kinase family. ArgB subfamily.

It localises to the cytoplasm. It carries out the reaction N-acetyl-L-glutamate + ATP = N-acetyl-L-glutamyl 5-phosphate + ADP. Its pathway is amino-acid biosynthesis; L-arginine biosynthesis; N(2)-acetyl-L-ornithine from L-glutamate: step 2/4. Catalyzes the ATP-dependent phosphorylation of N-acetyl-L-glutamate. The protein is Acetylglutamate kinase of Nitrosomonas eutropha (strain DSM 101675 / C91 / Nm57).